The sequence spans 363 residues: Peptide chain release factor 2 (363 aa).

Gln251 is subject to N5-methylglutamine.

This sequence belongs to the prokaryotic/mitochondrial release factor family. Methylated by PrmC. Methylation increases the termination efficiency of RF2.

The protein localises to the cytoplasm. Peptide chain release factor 2 directs the termination of translation in response to the peptide chain termination codons UGA and UAA. This Helicobacter acinonychis (strain Sheeba) protein is Peptide chain release factor 2.